A 199-amino-acid chain; its full sequence is dITP/XTP pyrophosphatase (199 aa).

8–13 (TSNKNK) contributes to the substrate binding site. Residues Glu-40 and Asp-68 each coordinate Mg(2+). The active-site Proton acceptor is the Asp-68. Substrate-binding positions include Ser-69, 154–157 (FGYD), Lys-177, and 182–183 (HR).

This sequence belongs to the HAM1 NTPase family. Homodimer. It depends on Mg(2+) as a cofactor.

It carries out the reaction XTP + H2O = XMP + diphosphate + H(+). It catalyses the reaction dITP + H2O = dIMP + diphosphate + H(+). The enzyme catalyses ITP + H2O = IMP + diphosphate + H(+). Pyrophosphatase that catalyzes the hydrolysis of nucleoside triphosphates to their monophosphate derivatives, with a high preference for the non-canonical purine nucleotides XTP (xanthosine triphosphate), dITP (deoxyinosine triphosphate) and ITP. Seems to function as a house-cleaning enzyme that removes non-canonical purine nucleotides from the nucleotide pool, thus preventing their incorporation into DNA/RNA and avoiding chromosomal lesions. This chain is dITP/XTP pyrophosphatase, found in Wigglesworthia glossinidia brevipalpis.